The following is a 479-amino-acid chain: NADH-quinone oxidoreductase subunit N 2 (479 aa).

Transmembrane regions (helical) follow at residues 9–29, 40–60, 75–95, 110–130, 131–151, 164–184, 206–226, 238–258, 272–292, 299–319, 326–346, 371–391, 404–424, and 449–469; these read WALA…LLIV, LLLW…LMLA, RFAV…FFLS, YVLL…IDLL, SIYV…GFLR, VILG…IYGL, LLLA…AVPF, PTTI…AVIL, WIIV…VALV, LLAY…VAGG, VMLY…AVIM, ALLM…AGFF, GFVA…YFYI, and ATLA…AWFL.

The protein belongs to the complex I subunit 2 family. As to quaternary structure, NDH-1 is composed of 14 different subunits. Subunits NuoA, H, J, K, L, M, N constitute the membrane sector of the complex.

The protein localises to the cell inner membrane. The enzyme catalyses a quinone + NADH + 5 H(+)(in) = a quinol + NAD(+) + 4 H(+)(out). Its function is as follows. NDH-1 shuttles electrons from NADH, via FMN and iron-sulfur (Fe-S) centers, to quinones in the respiratory chain. The immediate electron acceptor for the enzyme in this species is believed to be ubiquinone. Couples the redox reaction to proton translocation (for every two electrons transferred, four hydrogen ions are translocated across the cytoplasmic membrane), and thus conserves the redox energy in a proton gradient. The polypeptide is NADH-quinone oxidoreductase subunit N 2 (Rhizobium meliloti (strain 1021) (Ensifer meliloti)).